Reading from the N-terminus, the 490-residue chain is Asparagine--tRNA ligase (490 aa).

The protein belongs to the class-II aminoacyl-tRNA synthetase family. As to quaternary structure, homodimer.

The protein resides in the cytoplasm. It catalyses the reaction tRNA(Asn) + L-asparagine + ATP = L-asparaginyl-tRNA(Asn) + AMP + diphosphate + H(+). The protein is Asparagine--tRNA ligase of Rhodopirellula baltica (strain DSM 10527 / NCIMB 13988 / SH1).